Here is a 177-residue protein sequence, read N- to C-terminus: Probable nicotinate-nucleotide adenylyltransferase (177 aa).

It belongs to the NadD family.

The enzyme catalyses nicotinate beta-D-ribonucleotide + ATP + H(+) = deamido-NAD(+) + diphosphate. It functions in the pathway cofactor biosynthesis; NAD(+) biosynthesis; deamido-NAD(+) from nicotinate D-ribonucleotide: step 1/1. Catalyzes the reversible adenylation of nicotinate mononucleotide (NaMN) to nicotinic acid adenine dinucleotide (NaAD). The polypeptide is Probable nicotinate-nucleotide adenylyltransferase (Nitratiruptor sp. (strain SB155-2)).